Here is a 137-residue protein sequence, read N- to C-terminus: Ribosomal RNA large subunit methyltransferase H (137 aa).

S-adenosyl-L-methionine contacts are provided by residues Leu-56, Gly-85, and 104–109; that span reads LSPLTF.

Belongs to the RNA methyltransferase RlmH family. Homodimer.

It is found in the cytoplasm. The catalysed reaction is pseudouridine(1915) in 23S rRNA + S-adenosyl-L-methionine = N(3)-methylpseudouridine(1915) in 23S rRNA + S-adenosyl-L-homocysteine + H(+). Functionally, specifically methylates the pseudouridine at position 1915 (m3Psi1915) in 23S rRNA. The polypeptide is Ribosomal RNA large subunit methyltransferase H (Prochlorococcus marinus subsp. pastoris (strain CCMP1986 / NIES-2087 / MED4)).